The following is an 89-amino-acid chain: Sodium channel toxin To13 (89 aa).

The signal sequence occupies residues 1–18; that stretch reads MKTLFLIITSFILLEVEG. The 68-residue stretch at 20-87 folds into the LCN-type CS-alpha/beta domain; sequence KNGYPRDSKG…TWKNKEPKCK (68 aa). Disulfide bonds link Cys-30/Cys-86, Cys-34/Cys-60, Cys-45/Cys-67, and Cys-49/Cys-69.

This sequence belongs to the long (4 C-C) scorpion toxin superfamily. Sodium channel inhibitor family. As to expression, expressed by the venom gland.

The protein resides in the secreted. In terms of biological role, inhibits voltage-gated sodium channels (Nav). In Tityus obscurus (Amazonian scorpion), this protein is Sodium channel toxin To13.